A 133-amino-acid polypeptide reads, in one-letter code: Small ribosomal subunit protein uS9 (133 aa).

The interval 102–133 (KPKGLLTRDPREVERKKYGLKKARRAPQFSKR) is disordered. Over residues 107–118 (LTRDPREVERKK) the composition is skewed to basic and acidic residues. Positions 119–133 (YGLKKARRAPQFSKR) are enriched in basic residues.

The protein belongs to the universal ribosomal protein uS9 family.

The protein is Small ribosomal subunit protein uS9 of Deinococcus deserti (strain DSM 17065 / CIP 109153 / LMG 22923 / VCD115).